We begin with the raw amino-acid sequence, 124 residues long: Small ribosomal subunit protein uS12 (124 aa).

D89 carries the post-translational modification 3-methylthioaspartic acid.

This sequence belongs to the universal ribosomal protein uS12 family. In terms of assembly, part of the 30S ribosomal subunit. Contacts proteins S8 and S17. May interact with IF1 in the 30S initiation complex.

Functionally, with S4 and S5 plays an important role in translational accuracy. Interacts with and stabilizes bases of the 16S rRNA that are involved in tRNA selection in the A site and with the mRNA backbone. Located at the interface of the 30S and 50S subunits, it traverses the body of the 30S subunit contacting proteins on the other side and probably holding the rRNA structure together. The combined cluster of proteins S8, S12 and S17 appears to hold together the shoulder and platform of the 30S subunit. This chain is Small ribosomal subunit protein uS12, found in Vibrio atlanticus (strain LGP32) (Vibrio splendidus (strain Mel32)).